The chain runs to 114 residues: UPF0145 protein Acry_1752 (114 aa).

Belongs to the UPF0145 family.

The sequence is that of UPF0145 protein Acry_1752 from Acidiphilium cryptum (strain JF-5).